We begin with the raw amino-acid sequence, 253 residues long: MALPDFSMRQLLEAGVHFGHQTHRWNPKMEPFLFGDRNNIHIIDLAQTVPLLHQALVTVRDVVAGGGRVLFVGTKRQASDPVAAAARQCAQYYINHRWLGGMLTNWKTISNSIRRLRQLDEMLAGEAKGLTKKEVLNLTRERDKLERAIGGIKDMGGLPDLIFVIDTNKEEIAIQEARKLGIAVVAILDSNSNPDGIAFPVPGNDDAARAISLYCDLVSRAVIDGISQSQSASGVDVGAEAEPAVEIPAAAEA.

It belongs to the universal ribosomal protein uS2 family.

The polypeptide is Small ribosomal subunit protein uS2 (Parvibaculum lavamentivorans (strain DS-1 / DSM 13023 / NCIMB 13966)).